A 167-amino-acid chain; its full sequence is Phosphopantetheine adenylyltransferase (167 aa).

Ser10 contacts substrate. Residues 10 to 11 and His18 each bind ATP; that span reads SF. 3 residues coordinate substrate: Lys42, Ala79, and Arg93. ATP contacts are provided by residues 94-96, Glu104, and 129-135; these read GLR and VGHITAT.

Belongs to the bacterial CoaD family. As to quaternary structure, homohexamer. Mg(2+) serves as cofactor.

It is found in the cytoplasm. The catalysed reaction is (R)-4'-phosphopantetheine + ATP + H(+) = 3'-dephospho-CoA + diphosphate. The protein operates within cofactor biosynthesis; coenzyme A biosynthesis; CoA from (R)-pantothenate: step 4/5. Reversibly transfers an adenylyl group from ATP to 4'-phosphopantetheine, yielding dephospho-CoA (dPCoA) and pyrophosphate. In Methylocella silvestris (strain DSM 15510 / CIP 108128 / LMG 27833 / NCIMB 13906 / BL2), this protein is Phosphopantetheine adenylyltransferase.